The following is a 248-amino-acid chain: Probable transcriptional regulatory protein ECH_0704 (248 aa).

The tract at residues 1–21 is disordered; that stretch reads MAGHSQFANIKHRKGAQDAKR.

The protein belongs to the TACO1 family.

The protein resides in the cytoplasm. The polypeptide is Probable transcriptional regulatory protein ECH_0704 (Ehrlichia chaffeensis (strain ATCC CRL-10679 / Arkansas)).